We begin with the raw amino-acid sequence, 449 residues long: SWI/SNF chromatin-remodeling accessory subunit 2 (449 aa).

Over residues 1–11 the composition is skewed to polar residues; sequence MHSQQRPNPQM. Residues 1 to 56 form a disordered region; that stretch reads MHSQQRPNPQMNRHPYGTPGSAPQMRRPGGFAGQPPQMHGPRMVAPPAAPLPKKKK. In terms of domain architecture, SWIB/MDM2 spans 223–300; that stretch reads NHPAKFKLHP…PNKLHQLLQQ (78 aa).

The protein belongs to the SMARCD family. As to quaternary structure, component of the multiprotein chromatin-remodeling complexes SWI/SNF: SWI/SNF-A (BAF), SWI/SNF-B (PBAF) and related complexes. The canonical complex contains a catalytic subunit swsn-4, core subunits swsn-1 and swsn-5, and accessory subunits swsn-3, swsn-6, phf-10, dpff-1, swsn-9 and either ham-3/swsn-2.1 or swsn-2.2.

The protein localises to the nucleus. It localises to the nucleoplasm. It is found in the chromosome. Its subcellular location is the nucleus envelope. Involved in transcriptional activation and repression of select genes by chromatin remodeling (alteration of DNA-nucleosome topology). Component of SWI/SNF chromatin remodeling complexes that carry out key enzymatic activities, changing chromatin structure by altering DNA-histone contacts within a nucleosome in an ATP-dependent manner. Probably regulates vulva development through the let-60/Ras pathway. Involved in nuclear reassembly after mitosis and recruitment of nuclear envelope protein, mel-28, to the nuclear periphery in the early embryo and in the adult germline. Involved in gonadogenesis. This Caenorhabditis elegans protein is SWI/SNF chromatin-remodeling accessory subunit 2.